Here is a 91-residue protein sequence, read N- to C-terminus: Putative pterin-4-alpha-carbinolamine dehydratase (91 aa).

The protein belongs to the pterin-4-alpha-carbinolamine dehydratase family.

The catalysed reaction is (4aS,6R)-4a-hydroxy-L-erythro-5,6,7,8-tetrahydrobiopterin = (6R)-L-erythro-6,7-dihydrobiopterin + H2O. The sequence is that of Putative pterin-4-alpha-carbinolamine dehydratase from Sulfolobus acidocaldarius (strain ATCC 33909 / DSM 639 / JCM 8929 / NBRC 15157 / NCIMB 11770).